A 637-amino-acid chain; its full sequence is Probable ATP-binding protein YheS (637 aa).

ABC transporter domains lie at 2–246 and 313–527; these read IVFS…AQQQ and LKME…KQEN. ATP is bound by residues 34-41 and 345-352; these read GKNGCGKS and GRNGAGKS. The interval 523 to 559 is disordered; it reads QKQENQTDEAPKENANSAQARKDQKRREAELRAQTQP. Residues 542–553 show a composition bias toward basic and acidic residues; the sequence is ARKDQKRREAEL.

This sequence belongs to the ABC transporter superfamily. ABCF family. YheS subfamily.

Functionally, genetic data indicate it may be involved in ribosome assembly or function. Ectopic expression exacerbates the cold-sensitive growth phenotype of a bipA deletion. The chain is Probable ATP-binding protein YheS (yheS) from Escherichia coli O6:H1 (strain CFT073 / ATCC 700928 / UPEC).